We begin with the raw amino-acid sequence, 220 residues long: ATP synthase subunit delta (220 aa).

Belongs to the ATPase delta chain family. F-type ATPases have 2 components, F(1) - the catalytic core - and F(0) - the membrane proton channel. F(1) has five subunits: alpha(3), beta(3), gamma(1), delta(1), epsilon(1). F(0) has three main subunits: a(1), b(2) and c(10-14). The alpha and beta chains form an alternating ring which encloses part of the gamma chain. F(1) is attached to F(0) by a central stalk formed by the gamma and epsilon chains, while a peripheral stalk is formed by the delta and b chains.

It localises to the cell inner membrane. Functionally, f(1)F(0) ATP synthase produces ATP from ADP in the presence of a proton or sodium gradient. F-type ATPases consist of two structural domains, F(1) containing the extramembraneous catalytic core and F(0) containing the membrane proton channel, linked together by a central stalk and a peripheral stalk. During catalysis, ATP synthesis in the catalytic domain of F(1) is coupled via a rotary mechanism of the central stalk subunits to proton translocation. Its function is as follows. This protein is part of the stalk that links CF(0) to CF(1). It either transmits conformational changes from CF(0) to CF(1) or is implicated in proton conduction. This is ATP synthase subunit delta from Gluconobacter oxydans (strain 621H) (Gluconobacter suboxydans).